Here is a 151-residue protein sequence, read N- to C-terminus: Mini-ribonuclease 3 (151 aa).

The active site involves aspartate 30.

The protein belongs to the MrnC RNase family. In terms of assembly, homodimer. It depends on Mg(2+) as a cofactor.

The protein resides in the cytoplasm. In terms of biological role, involved in correct processing of both the 5' and 3' ends of 23S rRNA precursor. Processes 30S rRNA precursor transcript even in absence of ribonuclease 3 (Rnc); Rnc processes 30S rRNA into smaller rRNA precursors. The polypeptide is Mini-ribonuclease 3 (Thermosynechococcus vestitus (strain NIES-2133 / IAM M-273 / BP-1)).